A 165-amino-acid chain; its full sequence is Transcription antitermination protein NusB (165 aa).

This sequence belongs to the NusB family.

In terms of biological role, involved in transcription antitermination. Required for transcription of ribosomal RNA (rRNA) genes. Binds specifically to the boxA antiterminator sequence of the ribosomal RNA (rrn) operons. In Rhodococcus erythropolis (strain PR4 / NBRC 100887), this protein is Transcription antitermination protein NusB.